A 363-amino-acid chain; its full sequence is Melanoma-associated antigen B16 (363 aa).

The disordered stretch occupies residues 33–124; that stretch reads EPCSSPHLMA…PDQSDSTDLP (92 aa). A compositionally biased stretch (low complexity) spans 82–97; the sequence is ASTSSDLQHPYDSSSE. The region spanning 128 to 327 is the MAGE domain; sequence VDGKVDFLVN…TVFLSQYEEA (200 aa). Positions 342 to 363 are disordered; sequence HADSSSTSGESSSDTSSNFSQV.

The sequence is that of Melanoma-associated antigen B16 (Mageb16) from Mus musculus (Mouse).